The primary structure comprises 922 residues: Two-component sensor PprA (922 aa).

Residues 1–10 (MFEFSRSSSA) show a composition bias toward low complexity. Positions 1 to 22 (MFEFSRSSSAEAERPEPFSQEG) are disordered. Residues 506–558 (VKTRYRLADGQGNWHWLYDEAKLLRDAQGLPSEAVGLWLDVTEQHLAAQRIAE) form the PAC 1 domain. One can recognise a PAS domain in the interval 559–622 (SEERYRVLVE…EDASALRARL (64 aa)). In terms of domain architecture, PAC 2 spans 632–684 (EVPELRFNLPGQRFLWLVWAERPLFDARGELCEVQAVGRDNTPVRRAQQQLAQ). Residues 697–916 (GLAHEVKQPL…LFVVRLPLAA (220 aa)) enclose the Histidine kinase domain. H700 is subject to Phosphohistidine; by autocatalysis.

Autophosphorylated.

It carries out the reaction ATP + protein L-histidine = ADP + protein N-phospho-L-histidine.. In terms of biological role, member of the two-component regulatory system PprA/PprB involved in biofilm formation by controlling the expression of many related genes including type IVb pili major subunit flp pilin, adhesin bapA or cupE fimbriae. Functions as a heme sensor histidine kinase which is autophosphorylated at a histidine residue and transfers its phosphate group to PprB. The polypeptide is Two-component sensor PprA (Pseudomonas aeruginosa (strain ATCC 15692 / DSM 22644 / CIP 104116 / JCM 14847 / LMG 12228 / 1C / PRS 101 / PAO1)).